We begin with the raw amino-acid sequence, 295 residues long: RNA polymerase sigma factor RpoH (295 aa).

The tract at residues 52–121 is sigma-70 factor domain-2; that stretch reads MVTSHLRLVA…IQEYILRSWS (70 aa). An Interaction with polymerase core subunit RpoC motif is present at residues 76-79; that stretch reads EVIS. Positions 230–281 are sigma-70 factor domain-4; the sequence is AMVELTDRERHILTERRLKDDPTTLEELAAQYGVSRERVRQIEVRAFEKLQK. A DNA-binding region (H-T-H motif) is located at residues 254–273; the sequence is LEELAAQYGVSRERVRQIEV.

This sequence belongs to the sigma-70 factor family. RpoH subfamily. As to quaternary structure, interacts with the RNA polymerase core enzyme.

Its subcellular location is the cytoplasm. In terms of biological role, sigma factors are initiation factors that promote the attachment of RNA polymerase to specific initiation sites and are then released. This sigma factor is involved in regulation of expression of heat shock genes. This is RNA polymerase sigma factor RpoH from Caulobacter vibrioides (strain ATCC 19089 / CIP 103742 / CB 15) (Caulobacter crescentus).